We begin with the raw amino-acid sequence, 652 residues long: ATP-binding cassette sub-family G member 5 (652 aa).

Positions 1-30 are disordered; it reads MSELPFLSPEGARGPHNNRGSQSSLEEGSV. Over 1–384 the chain is Cytoplasmic; it reads MSELPFLSPE…RVTRNLMRNK (384 aa). Residues 18–30 show a composition bias toward polar residues; sequence NRGSQSSLEEGSV. One can recognise an ABC transporter domain in the interval 39-294; sequence LGVLNVSFSV…FNNCGYPCPE (256 aa). Position 87–94 (87–94) interacts with ATP; sequence GSSGSGKT. Residues 385–405 traverse the membrane as a helical segment; it reads QVVIMRLVQNLIMGLFLIFYL. The ABC transmembrane type-2 domain occupies 389 to 646; the sequence is MRLVQNLIMG…ILGMVVFKVR (258 aa). Residues 406 to 422 are Extracellular-facing; that stretch reads LRVQNNMLKGAVQDRVG. The helical transmembrane segment at 423–443 threads the bilayer; the sequence is LLYQLVGATPYTGMLNAVNLF. Over 444-468 the chain is Cytoplasmic; the sequence is PMLRAVSDQESQDGLYQKWQMLLAY. Residues 469 to 490 traverse the membrane as a helical segment; sequence VLHALPFSIVATVIFSSVCYWT. Topologically, residues 491-501 are extracellular; the sequence is LGLYPEVARFG. Residues 502 to 522 form a helical membrane-spanning segment; sequence YFSAALLAPHLIGEFLTLVLL. Over 523-529 the chain is Cytoplasmic; the sequence is GMVQNPN. The helical transmembrane segment at 530–550 threads the bilayer; that stretch reads IVNSIVALLSISGLLIGSGFI. At 551-624 the chain is on the extracellular side; it reads RNIEEMPIPL…PGATSRFTTN (74 aa). N-linked (GlcNAc...) asparagine glycosylation is found at Asn-585 and Asn-592. The helical transmembrane segment at 625–645 threads the bilayer; the sequence is FLILYSFIPTLVILGMVVFKV. Residues 646–652 are Cytoplasmic-facing; it reads RDYLISR.

This sequence belongs to the ABC transporter superfamily. ABCG family. Eye pigment precursor importer (TC 3.A.1.204) subfamily. In terms of assembly, heterodimer with ABCG8. Requires Mg(2+) as cofactor. In terms of processing, N-glycosylated. N-glycosylation is important for efficient export out of the endoplasmic reticulum. In terms of tissue distribution, detected in liver (at protein level). Expressed only in liver and intestine.

The protein localises to the cell membrane. Its subcellular location is the apical cell membrane. The enzyme catalyses cholesterol(in) + ATP + H2O = cholesterol(out) + ADP + phosphate + H(+). It carries out the reaction sitosterol(in) + ATP + H2O = sitosterol(out) + ADP + phosphate + H(+). Functionally, ABCG5 and ABCG8 form an obligate heterodimer that mediates Mg(2+)- and ATP-dependent sterol transport across the cell membrane. Plays an essential role in the selective transport of dietary plant sterols and cholesterol in and out of the enterocytes and in the selective sterol excretion by the liver into bile. Required for normal sterol homeostasis. The heterodimer with ABCG8 has ATPase activity. The sequence is that of ATP-binding cassette sub-family G member 5 from Rattus norvegicus (Rat).